Here is an 84-residue protein sequence, read N- to C-terminus: Small ribosomal subunit protein bS18 (84 aa).

Belongs to the bacterial ribosomal protein bS18 family. As to quaternary structure, part of the 30S ribosomal subunit. Forms a tight heterodimer with protein bS6.

Binds as a heterodimer with protein bS6 to the central domain of the 16S rRNA, where it helps stabilize the platform of the 30S subunit. The polypeptide is Small ribosomal subunit protein bS18 (Vesicomyosocius okutanii subsp. Calyptogena okutanii (strain HA)).